A 295-amino-acid polypeptide reads, in one-letter code: Indole-3-glycerol phosphate synthase (295 aa).

This sequence belongs to the TrpC family.

The enzyme catalyses 1-(2-carboxyphenylamino)-1-deoxy-D-ribulose 5-phosphate + H(+) = (1S,2R)-1-C-(indol-3-yl)glycerol 3-phosphate + CO2 + H2O. Its pathway is amino-acid biosynthesis; L-tryptophan biosynthesis; L-tryptophan from chorismate: step 4/5. This chain is Indole-3-glycerol phosphate synthase, found in Prochlorococcus marinus (strain NATL2A).